Here is a 354-residue protein sequence, read N- to C-terminus: Biotin synthase (354 aa).

In terms of domain architecture, Radical SAM core spans 40–258 (NEVQVSTLLS…IAVARILMPR (219 aa)). The [4Fe-4S] cluster site is built by C55, C59, and C62. Positions 99, 130, 190, and 262 each coordinate [2Fe-2S] cluster.

This sequence belongs to the radical SAM superfamily. Biotin synthase family. As to quaternary structure, homodimer. The cofactor is [4Fe-4S] cluster. It depends on [2Fe-2S] cluster as a cofactor.

The catalysed reaction is (4R,5S)-dethiobiotin + (sulfur carrier)-SH + 2 reduced [2Fe-2S]-[ferredoxin] + 2 S-adenosyl-L-methionine = (sulfur carrier)-H + biotin + 2 5'-deoxyadenosine + 2 L-methionine + 2 oxidized [2Fe-2S]-[ferredoxin]. It functions in the pathway cofactor biosynthesis; biotin biosynthesis; biotin from 7,8-diaminononanoate: step 2/2. Functionally, catalyzes the conversion of dethiobiotin (DTB) to biotin by the insertion of a sulfur atom into dethiobiotin via a radical-based mechanism. This is Biotin synthase from Hahella chejuensis (strain KCTC 2396).